Consider the following 322-residue polypeptide: Endochitinase CH25 (322 aa).

Residues 1–20 form the signal peptide; that stretch reads MKSCLLLFLIFSFLLSFSLA. Residues 21 to 62 form the Chitin-binding type-1 domain; the sequence is EQCGRQAGGALCPNGLCCSEFGWCGDTEAYCKQPGCQSQCGG. 7 disulfide bridges follow: Cys-23-Cys-38, Cys-32-Cys-44, Cys-37-Cys-51, Cys-56-Cys-60, Cys-92-Cys-154, Cys-166-Cys-174, and Cys-273-Cys-305. The Proton donor role is filled by Glu-136.

This sequence belongs to the glycosyl hydrolase 19 family. Chitinase class I subfamily. High expression in roots, moderate in floral tissues and low in stems and leaves.

The catalysed reaction is Random endo-hydrolysis of N-acetyl-beta-D-glucosaminide (1-&gt;4)-beta-linkages in chitin and chitodextrins.. This Brassica napus (Rape) protein is Endochitinase CH25.